The following is a 78-amino-acid chain: Large ribosomal subunit protein bL28 (78 aa).

A disordered region spans residues 1-20 (MSRVCQVTGKGPVTGNNISH).

Belongs to the bacterial ribosomal protein bL28 family.

This is Large ribosomal subunit protein bL28 from Pseudomonas putida (strain W619).